A 420-amino-acid chain; its full sequence is MKFTNLTAKEFGAFTDSMPYSHFTQTVGHYELKLAEGYETHLVGIKNNNNEVIAACLLTAVPVMKVFKYFYSNRGPVIDYENQELVHFFFNELSKYVKKHRCLYLHIDPYLPYQYLNHDGEITGNAGNDWFFDKMSNLGFEHTGFHKGFDPVLQIRYHSVLDLKDKTADDIIKNMDGLRKRNTKKVKKNGVKVRYLSEEELPIFRSFMEDTSESKAFADRDDKFYYNRLKYYKDRVLVPLAYINFDEYIKELNEERDILNKDLNKALKDIEKRPENKKAHNKRDNLQQQLDANEQKIEEGKRLQEEHGNELPISAGFFFINPFEVVYYAGGTSNAFRHFAGSYAVQWEMINYALNHGIDRYNFYGVSGKFTEDAEDAGVVKFKKGYNAEIIEYVGDFIKPINKPVYAAYTALKKVKDRIF.

It belongs to the FemABX family. Homodimer. Interacts with FemB.

Its subcellular location is the cytoplasm. The enzyme catalyses beta-D-GlcNAc-(1-&gt;4)-Mur2Ac(oyl-L-Ala-D-isoglutaminyl-L-Lys-(N(6)-Gly)-D-Ala-D-Ala)-di-trans,octa-cis-undecaprenyl diphosphate + 2 glycyl-tRNA(Gly) = MurNAc-L-Ala-D-isoglutaminyl-L-Lys-(N(6)-tri-Gly)-D-Ala-D-Ala-diphospho-di-trans,octa-cis-undecaprenyl-GlcNAc + 2 tRNA(Gly) + 2 H(+). In terms of biological role, catalyzes the formation of the pentaglycine interpeptide bridge, which is characteristic of the S.aureus peptidoglycan. Adds glycines 2 and 3 of the pentaglycine bridge, using glycyl-tRNA(Gly) as donor. Involved in resistance to methicillin. The polypeptide is Aminoacyltransferase FemA (femA) (Staphylococcus aureus (strain Mu50 / ATCC 700699)).